The primary structure comprises 1047 residues: Ribonucleoside-diphosphate reductase subunit alpha (1047 aa).

3 consecutive ATP-cone domains span residues 9-111, 118-219, and 237-327; these read CTIV…KAHR, LSVV…ARVR, and VEVL…EALG. Substrate is bound by residues T442, 457 to 458, G486, 670 to 674, and 857 to 861; these read SC, NLCTE, and PTATI. The cysteines at positions 458 and 687 are disulfide-linked. The active-site Proton acceptor is N670. C672 acts as the Cysteine radical intermediate in catalysis. E674 acts as the Proton acceptor in catalysis.

This sequence belongs to the ribonucleoside diphosphate reductase large chain family. Tetramer of two alpha and two beta subunits.

It catalyses the reaction a 2'-deoxyribonucleoside 5'-diphosphate + [thioredoxin]-disulfide + H2O = a ribonucleoside 5'-diphosphate + [thioredoxin]-dithiol. With respect to regulation, under complex allosteric control mediated by deoxynucleoside triphosphates and ATP binding. The type of nucleotide bound at the specificity site determines substrate preference. It seems probable that ATP makes the enzyme reduce CDP and UDP, dGTP favors ADP reduction and dTTP favors GDP reduction. Its function is as follows. Provides the precursors necessary for DNA synthesis. Catalyzes the biosynthesis of deoxyribonucleotides from the corresponding ribonucleotides. This Chlamydia trachomatis serovar D (strain ATCC VR-885 / DSM 19411 / UW-3/Cx) protein is Ribonucleoside-diphosphate reductase subunit alpha (nrdA).